The sequence spans 341 residues: Methionine import ATP-binding protein MetN 2 (341 aa).

The ABC transporter domain maps to 2–241 (ILLENVKKIY…PQQDITKRFV (240 aa)). 38 to 45 (GYSGAGKS) contributes to the ATP binding site.

This sequence belongs to the ABC transporter superfamily. Methionine importer (TC 3.A.1.24) family. The complex is composed of two ATP-binding proteins (MetN), two transmembrane proteins (MetI) and a solute-binding protein (MetQ).

The protein resides in the cell membrane. The enzyme catalyses L-methionine(out) + ATP + H2O = L-methionine(in) + ADP + phosphate + H(+). It catalyses the reaction D-methionine(out) + ATP + H2O = D-methionine(in) + ADP + phosphate + H(+). Its function is as follows. Part of the ABC transporter complex MetNIQ involved in methionine import. Responsible for energy coupling to the transport system. The chain is Methionine import ATP-binding protein MetN 2 from Bacillus thuringiensis subsp. konkukian (strain 97-27).